Here is a 323-residue protein sequence, read N- to C-terminus: Arginase-1 (323 aa).

A disordered region spans residues 1 to 27 (MSSKPKSLEIIGAPFSKGQPRGGVEKG). Ser-7 is subject to Phosphoserine. An N6-succinyllysine modification is found at Lys-17. Ser-62 and Ser-72 each carry phosphoserine. Lys-75 is subject to N6-succinyllysine. Mn(2+) is bound by residues His-101, Asp-124, His-126, and Asp-128. Residues 126 to 130 (HTDIN) and 137 to 139 (SGN) each bind substrate. Ser-163 is modified (phosphoserine). Asp-183 contacts substrate. Ser-217 is modified (phosphoserine). 2 residues coordinate Mn(2+): Asp-232 and Asp-234. The substrate site is built by Thr-246 and Glu-277. Thr-281 is subject to Phosphothreonine.

It belongs to the arginase family. Homotrimer. Interacts with CMTM6. Mn(2+) is required as a cofactor. In terms of tissue distribution, expressed in macrophages. Expressed in precursor and mature group 2 innate lymphoid cells (ILC2s). Expressed in lung tumor-associated myeloid cells. Expressed in lung tumor-infiltrating dendritic cells.

The protein resides in the cytoplasm. It is found in the cytoplasmic granule. The catalysed reaction is L-arginine + H2O = urea + L-ornithine. It functions in the pathway nitrogen metabolism; urea cycle; L-ornithine and urea from L-arginine: step 1/1. Its function is as follows. Key element of the urea cycle converting L-arginine to urea and L-ornithine, which is further metabolized into metabolites proline and polyamides that drive collagen synthesis and bioenergetic pathways critical for cell proliferation, respectively; the urea cycle takes place primarily in the liver and, to a lesser extent, in the kidneys. Functionally, functions in L-arginine homeostasis in nonhepatic tissues characterized by the competition between nitric oxide synthase (NOS) and arginase for the available intracellular substrate arginine. Arginine metabolism is a critical regulator of innate and adaptive immune responses. Involved in an antimicrobial effector pathway in polymorphonuclear granulocytes (PMN). Upon PMN cell death is liberated from the phagolysosome and depletes arginine in the microenvironment leading to suppressed T cell and natural killer (NK) cell proliferation and cytokine secretion. In group 2 innate lymphoid cells (ILC2s) promotes acute type 2 inflammation in the lung and is involved in optimal ILC2 proliferation but not survival. Plays a role in the immune response of alternatively activated or M2 macrophages in processes such as wound healing and tissue regeneration, immune defense against multicellular pathogens and parasites, and immune suppression and allergic inflammation; the regulatory outcome seems to be organ specific. In tumor-infiltrating dendritic cells (DCs) and myeloid-derived suppressor cells (MDSCs) plays a role in suppression of T cell-mediated antitumor immunity. This Mus musculus (Mouse) protein is Arginase-1 (Arg1).